The sequence spans 447 residues: Trigger factor (447 aa).

In terms of domain architecture, PPIase FKBP-type spans 159-244 (GDMLLMQVES…VREIKEEKLP (86 aa)).

It belongs to the FKBP-type PPIase family. Tig subfamily.

The protein resides in the cytoplasm. The enzyme catalyses [protein]-peptidylproline (omega=180) = [protein]-peptidylproline (omega=0). Involved in protein export. Acts as a chaperone by maintaining the newly synthesized protein in an open conformation. Functions as a peptidyl-prolyl cis-trans isomerase. The sequence is that of Trigger factor from Dehalococcoides mccartyi (strain CBDB1).